The primary structure comprises 56 residues: Large ribosomal subunit protein uL30 (56 aa).

Belongs to the universal ribosomal protein uL30 family. In terms of assembly, part of the 50S ribosomal subunit.

In Nitratidesulfovibrio vulgaris (strain ATCC 29579 / DSM 644 / CCUG 34227 / NCIMB 8303 / VKM B-1760 / Hildenborough) (Desulfovibrio vulgaris), this protein is Large ribosomal subunit protein uL30.